A 597-amino-acid polypeptide reads, in one-letter code: Polyphenol oxidase latent form, chloroplastic (597 aa).

Residues 1-49 (MATAPSPTTMGTYSSLISTNSFSTFLPNKSQLSLSGKSKHYVARRSSIS) constitute a chloroplast transit peptide. The interval 49 to 70 (SCKATNNNNSNNQNEQQEESSR) is disordered. The N-terminal 52 residues, 50–101 (CKATNNNNSNNQNEQQEESSRLLGKLDRRNILIGLGGLYGATTLDRKPFAFA), are a transit peptide targeting the thylakoid. A compositionally biased stretch (low complexity) spans 54 to 63 (NNNNSNNQNE). 2 disulfides stabilise this stretch: Cys-112–Cys-128 and Cys-127–Cys-189. Cu cation is bound by residues His-188, His-209, His-218, His-341, His-345, and His-375. The segment at residues 192–209 (CNGAYPQVGFTDNDIQVH) is a cross-link (2'-(S-cysteinyl)-histidine (Cys-His)).

It belongs to the tyrosinase family. In terms of assembly, monomer. Cu(2+) is required as a cofactor. In terms of tissue distribution, expressed in immature-green fruit.

It is found in the plastid. Its subcellular location is the chloroplast thylakoid lumen. It catalyses the reaction 2 catechol + O2 = 2 1,2-benzoquinone + 2 H2O. Its activity is regulated as follows. Activated in the presence of substrate at low pH. Specific activity fluctuates during fruit ripening, starting at immature-green stage, reaching a peak at the breaker stage, followed by a sharp decrease until the half-ripe stage to remain stable during the following development stages. Triggered by CuSO(4) and by low concentrations of SDS. Repressed by several inhibitors including 4-hexylresorcinol, ascorbic acid, benzoic acid, kojic acid, glutathione (reduced form), L-cysteine and sodium metabisulfite. Inhibited by various salt such as FeSO(4), KCl, NaCl, CaCl(2), MnCl(2), NiCl(2) and AlCl(3). Spontaneously activated during storage at 4 degrees Celsius. Functionally, catalyzes the oxidation of mono- and o-diphenols to o-diquinones. Uses preferentially 4-methylcatechol and chlorogenic acid as substrates, followed by caffeic acid, pyrogallol, and catechol, but barely active toward dopamine and L-dopa. No activity detected with monophenols (e.g. phenol and tyramine). This Prunus armeniaca (Apricot) protein is Polyphenol oxidase latent form, chloroplastic.